Consider the following 674-residue polypeptide: Methionine--tRNA ligase (674 aa).

The 'HIGH' region motif lies at 11-21 (PYANGDLHLGH). C142, C145, C155, and C158 together coordinate Zn(2+). The 'KMSKS' region signature appears at 330-334 (KMSKS). Residue K333 coordinates ATP. Residues 574–674 (DFMKVDLRIA…EGAQPGMRVK (101 aa)) enclose the tRNA-binding domain.

Belongs to the class-I aminoacyl-tRNA synthetase family. MetG type 1 subfamily. Homodimer. It depends on Zn(2+) as a cofactor.

Its subcellular location is the cytoplasm. It catalyses the reaction tRNA(Met) + L-methionine + ATP = L-methionyl-tRNA(Met) + AMP + diphosphate. Its function is as follows. Is required not only for elongation of protein synthesis but also for the initiation of all mRNA translation through initiator tRNA(fMet) aminoacylation. The chain is Methionine--tRNA ligase from Francisella tularensis subsp. holarctica (strain OSU18).